We begin with the raw amino-acid sequence, 418 residues long: Gamma-glutamyl phosphate reductase (418 aa).

Belongs to the gamma-glutamyl phosphate reductase family.

The protein resides in the cytoplasm. The catalysed reaction is L-glutamate 5-semialdehyde + phosphate + NADP(+) = L-glutamyl 5-phosphate + NADPH + H(+). Its pathway is amino-acid biosynthesis; L-proline biosynthesis; L-glutamate 5-semialdehyde from L-glutamate: step 2/2. Functionally, catalyzes the NADPH-dependent reduction of L-glutamate 5-phosphate into L-glutamate 5-semialdehyde and phosphate. The product spontaneously undergoes cyclization to form 1-pyrroline-5-carboxylate. The protein is Gamma-glutamyl phosphate reductase of Thermobifida fusca (strain YX).